Consider the following 335-residue polypeptide: Probable peroxidase 26 (335 aa).

A signal peptide spans 1–18 (MVMIHIFLTVMVVGGVSL). Disulfide bonds link Cys-46/Cys-122, Cys-79/Cys-84, Cys-128/Cys-331, and Cys-205/Cys-237. Residue Arg-73 is part of the active site. The Ca(2+) site is built by Asp-78, Val-81, Gly-83, Asp-85, and Ser-87. Pro-168 contacts substrate. His-198 contacts heme b. Ser-199 is a Ca(2+) binding site. An N-linked (GlcNAc...) asparagine glycan is attached at Asn-216. Ca(2+) is bound by residues Asp-255 and Ser-258. N-linked (GlcNAc...) asparagine glycosylation is found at Asn-259 and Asn-273.

Belongs to the peroxidase family. Classical plant (class III) peroxidase subfamily. Heme b serves as cofactor. Ca(2+) is required as a cofactor.

It is found in the secreted. The enzyme catalyses 2 a phenolic donor + H2O2 = 2 a phenolic radical donor + 2 H2O. In terms of biological role, removal of H(2)O(2), oxidation of toxic reductants, biosynthesis and degradation of lignin, suberization, auxin catabolism, response to environmental stresses such as wounding, pathogen attack and oxidative stress. The enzyme activity has to be proved. This chain is Probable peroxidase 26 (PER26), found in Arabidopsis thaliana (Mouse-ear cress).